A 137-amino-acid chain; its full sequence is Small ribosomal subunit protein uS9 (137 aa).

Positions 118–137 are disordered; that stretch reads KERKKYGLRKARKAPQYSKR.

This sequence belongs to the universal ribosomal protein uS9 family.

The sequence is that of Small ribosomal subunit protein uS9 from Acaryochloris marina (strain MBIC 11017).